The chain runs to 189 residues: Peptidyl-tRNA hydrolase (189 aa).

TRNA is bound at residue Y15. Catalysis depends on H20, which acts as the Proton acceptor. Y67, N69, and N115 together coordinate tRNA.

It belongs to the PTH family. Monomer.

The protein resides in the cytoplasm. The catalysed reaction is an N-acyl-L-alpha-aminoacyl-tRNA + H2O = an N-acyl-L-amino acid + a tRNA + H(+). In terms of biological role, hydrolyzes ribosome-free peptidyl-tRNAs (with 1 or more amino acids incorporated), which drop off the ribosome during protein synthesis, or as a result of ribosome stalling. Catalyzes the release of premature peptidyl moieties from peptidyl-tRNA molecules trapped in stalled 50S ribosomal subunits, and thus maintains levels of free tRNAs and 50S ribosomes. The protein is Peptidyl-tRNA hydrolase of Symbiobacterium thermophilum (strain DSM 24528 / JCM 14929 / IAM 14863 / T).